We begin with the raw amino-acid sequence, 286 residues long: Bifunctional protein FolD (286 aa).

Residues 165–167 (GRS) and S190 contribute to the NADP(+) site.

The protein belongs to the tetrahydrofolate dehydrogenase/cyclohydrolase family. Homodimer.

The catalysed reaction is (6R)-5,10-methylene-5,6,7,8-tetrahydrofolate + NADP(+) = (6R)-5,10-methenyltetrahydrofolate + NADPH. It catalyses the reaction (6R)-5,10-methenyltetrahydrofolate + H2O = (6R)-10-formyltetrahydrofolate + H(+). It participates in one-carbon metabolism; tetrahydrofolate interconversion. Functionally, catalyzes the oxidation of 5,10-methylenetetrahydrofolate to 5,10-methenyltetrahydrofolate and then the hydrolysis of 5,10-methenyltetrahydrofolate to 10-formyltetrahydrofolate. This is Bifunctional protein FolD from Staphylococcus epidermidis (strain ATCC 12228 / FDA PCI 1200).